We begin with the raw amino-acid sequence, 87 residues long: Large ribosomal subunit protein eL33 (87 aa).

It belongs to the eukaryotic ribosomal protein eL33 family.

This Pyrococcus abyssi (strain GE5 / Orsay) protein is Large ribosomal subunit protein eL33.